The following is a 151-amino-acid chain: Kinetoplast-associated protein 1 (151 aa).

Residues methionine 1–leucine 9 constitute a propeptide that is removed on maturation. Residues alanine 13–lysine 151 are disordered. 3 stretches are compositionally biased toward low complexity: residues serine 15–valine 49, alanine 70–lysine 91, and serine 101–glycine 111. Positions lysine 112–lysine 151 are enriched in basic residues.

It belongs to the KAP family. In terms of assembly, associates with the kinetoplast DNA network.

It localises to the mitochondrion matrix. The protein resides in the kinetoplast. In terms of biological role, histone H1-like DNA-binding protein involved in the organization and segregation of kinetoplast DNA (kDNA). The mitochondrial DNA of kinetoplastid protozoa consists of about 5,000 minicircles and 20 to 30 maxicircles. These circular DNAs are held together by catenation into a highly organized compact disk structure referred to as a kinetoplast DNA (kDNA) network. Binds preferentially to a specific fragment of minicircle DNA and is able to compact kDNA networks through DNA charge neutralization and condensation. The protein is Kinetoplast-associated protein 1 (KAP4) of Crithidia fasciculata.